We begin with the raw amino-acid sequence, 146 residues long: Large ribosomal subunit protein uL15 (146 aa).

The segment covering 1 to 10 (MRLNQLSPSA) has biased composition (polar residues). Positions 1-54 (MRLNQLSPSAGSRPDAKRAGRGAGSGLGKTAGRGHKGQHSRSGGFHKVGFEGGQ) are disordered. The span at 21 to 31 (RGAGSGLGKTA) shows a compositional bias: gly residues.

The protein belongs to the universal ribosomal protein uL15 family. As to quaternary structure, part of the 50S ribosomal subunit.

Its function is as follows. Binds to the 23S rRNA. The chain is Large ribosomal subunit protein uL15 from Halorhodospira halophila (strain DSM 244 / SL1) (Ectothiorhodospira halophila (strain DSM 244 / SL1)).